The chain runs to 110 residues: UPF0122 protein Aflv_1766 (110 aa).

This sequence belongs to the UPF0122 family.

Might take part in the signal recognition particle (SRP) pathway. This is inferred from the conservation of its genetic proximity to ftsY/ffh. May be a regulatory protein. This is UPF0122 protein Aflv_1766 from Anoxybacillus flavithermus (strain DSM 21510 / WK1).